A 290-amino-acid chain; its full sequence is Membrane protein insertase YidC (290 aa).

Residues 1-19 (MKKKTLLPLFLGIMVFLAG) form the signal peptide. Cysteine 20 is lipidated: N-palmitoyl cysteine. Residue cysteine 20 is the site of S-diacylglycerol cysteine attachment. A run of 5 helical transmembrane segments spans residues 56-76 (YGLA…PFML), 134-154 (MLGC…YFVL), 176-196 (PDIW…YVSS), 207-224 (GYMM…ISLS), and 229-251 (LGLY…NIYY). Residues 270 to 290 (HNGGSNKKGKNTQVVSKKKKK) are disordered.

It belongs to the OXA1/ALB3/YidC family. Type 2 subfamily.

The protein localises to the cell membrane. In terms of biological role, required for the insertion and/or proper folding and/or complex formation of integral membrane proteins into the membrane. Involved in integration of membrane proteins that insert both dependently and independently of the Sec translocase complex, as well as at least some lipoproteins. The chain is Membrane protein insertase YidC from Staphylococcus aureus (strain MRSA252).